Consider the following 78-residue polypeptide: Probable Vpr-like protein (78 aa).

The Nuclear export signal motif lies at 35-43 (AIRLLQGLF). The Nuclear localization signal motif lies at 45–54 (RYRFKKPRVD).

It localises to the virion. The protein resides in the host nucleus. Its function is as follows. Seems to function as a Vpr-like protein, since it mediates host cell cycle arrest in G2 phase. Cell cycle arrest creates a favorable environment for maximizing viral expression and production. In Feline immunodeficiency virus (isolate Petaluma) (FIV), this protein is Probable Vpr-like protein.